The following is a 279-amino-acid chain: Digeranylgeranylglyceryl phosphate synthase (279 aa).

6 helical membrane passes run 27 to 47 (LIAT…VALI), 90 to 110 (FVGG…IAII), 127 to 147 (VLGN…GGAF), 199 to 219 (TGIF…LPFG), 222 to 242 (WGLF…FGAF), and 259 to 279 (TSIL…AAVI).

It belongs to the UbiA prenyltransferase family. DGGGP synthase subfamily. Requires Mg(2+) as cofactor.

Its subcellular location is the cell membrane. The catalysed reaction is sn-3-O-(geranylgeranyl)glycerol 1-phosphate + (2E,6E,10E)-geranylgeranyl diphosphate = 2,3-bis-O-(geranylgeranyl)-sn-glycerol 1-phosphate + diphosphate. It functions in the pathway membrane lipid metabolism; glycerophospholipid metabolism. Functionally, prenyltransferase that catalyzes the transfer of the geranylgeranyl moiety of geranylgeranyl diphosphate (GGPP) to the C2 hydroxyl of (S)-3-O-geranylgeranylglyceryl phosphate (GGGP). This reaction is the second ether-bond-formation step in the biosynthesis of archaeal membrane lipids. This chain is Digeranylgeranylglyceryl phosphate synthase, found in Methanoculleus marisnigri (strain ATCC 35101 / DSM 1498 / JR1).